The sequence spans 872 residues: MKSIHGFLLFLITAYVILESVQAQDQLGFISLDCGLVPKNATYTEKTTNITYKSDANYIDSGLVGRISAEYKAQLQQQTWTVRSFPEGERNCYNFNLTAKSRYLIRATFTYGNYDGLRQVPKFDIHIGPSKWTSVKLDGVGNGAVLEMIHVLTQDRLQICLVKTGKGIPFISSLELRPLNNNTYLTQSGSLIGFARVFFSATPTFIRYDEDIHDRVWVRQFGNGLKSISTDLLVDTSNPYDVPQAVAKTACVPSNASQPLIFDWTLDNITSQSYVYMHFAEIQTLKDNDIREFNITYNGGQNVYSYLRPEKFEISTLFDSKPLSSPDGSFSLSFTKTGNSTLPPLINGLEIYKVLDLLELETDQDEVSAMINIKATYDLSKKVSWQGDPCAPKSYQWEGLNCSYPNSDQPRIISLNLAENKLTGTITPEISKLTQLIELDLSKNDLSGEIPEFFADMKLLKLINLSGNLGLNSTIPDSIQQRLDSKSLILILSKTVTKTVTLKGKSKKVPMIPIVASVAGVFALLVILAIFFVVRRKNGESNKGTNPSIITKERRITYPEVLKMTNNFERVLGKGGFGTVYHGNLEDTQVAVKMLSHSSAQGYKEFKAEVELLLRVHHRNLVGLVGYCDDGDNLALIYEYMANGDLKENMSGKRGGNVLTWENRMQIAVEAAQGLEYLHNGCTPPMVHRDVKTTNILLNERYGAKLADFGLSRSFPVDGESHVSTVVAGTPGYLDPEYYRTNWLSEKSDVYSFGVVLLEIVTNQPVTDKTRERTHINEWVGSMLTKGDIKSILDPKLMGDYDTNGAWKIVELALACVNPSSNRRPTMAHVVTELNECVALENARRQGREEMHTSGYVDFSRSSASEFSPGAR.

An N-terminal signal peptide occupies residues 1-23 (MKSIHGFLLFLITAYVILESVQA). The Extracellular portion of the chain corresponds to 24-513 (QDQLGFISLD…GKSKKVPMIP (490 aa)). N-linked (GlcNAc...) asparagine glycosylation is found at Asn40, Asn49, Asn96, Asn181, Asn255, Asn268, Asn294, Asn339, and Asn401. LRR repeat units lie at residues 411–434 (RIISLNLAENKLTGTITPEISKLT), 435–457 (QLIELDLSKNDLSGEIPEFFADM), and 459–482 (LLKLINLSGNLGLNSTIPDSIQQR). Asn464 and Asn472 each carry an N-linked (GlcNAc...) asparagine glycan. A helical membrane pass occupies residues 514–534 (IVASVAGVFALLVILAIFFVV). Residues 535 to 872 (RRKNGESNKG…SASEFSPGAR (338 aa)) are Cytoplasmic-facing. A Phosphothreonine modification is found at Thr557. The Protein kinase domain maps to 566–838 (NNFERVLGKG…HVVTELNECV (273 aa)). ATP-binding positions include 572–580 (LGKGGFGTV) and Lys593. The residue at position 638 (Tyr638) is a Phosphotyrosine. Asp690 (proton acceptor) is an active-site residue. The residue at position 724 (Ser724) is a Phosphoserine. Phosphothreonine occurs at positions 725 and 730. At Tyr738 the chain carries Phosphotyrosine.

Belongs to the protein kinase superfamily. Ser/Thr protein kinase family.

The protein localises to the membrane. The enzyme catalyses L-seryl-[protein] + ATP = O-phospho-L-seryl-[protein] + ADP + H(+). It carries out the reaction L-threonyl-[protein] + ATP = O-phospho-L-threonyl-[protein] + ADP + H(+). In Arabidopsis thaliana (Mouse-ear cress), this protein is Probable LRR receptor-like serine/threonine-protein kinase At1g51880.